A 453-amino-acid chain; its full sequence is Methionine aminopeptidase 2-1 (453 aa).

Residues 1 to 12 (MGSKTPDGHRQS) are compositionally biased toward basic and acidic residues. The segment at 1-101 (MGSKTPDGHR…TTPPRVPLST (101 aa)) is disordered. Positions 46-57 (GEDDDDDDENEE) are enriched in acidic residues. Positions 67-82 (KKKKRKKSKKKNKKSK) are enriched in basic residues. Histidine 210 lines the substrate pocket. Aspartate 231, aspartate 242, and histidine 306 together coordinate a divalent metal cation. Histidine 314 serves as a coordination point for substrate. Glutamate 339 and glutamate 434 together coordinate a divalent metal cation.

Belongs to the peptidase M24A family. Methionine aminopeptidase eukaryotic type 2 subfamily. Co(2+) serves as cofactor. The cofactor is Zn(2+). Mn(2+) is required as a cofactor. It depends on Fe(2+) as a cofactor.

The protein resides in the cytoplasm. The catalysed reaction is Release of N-terminal amino acids, preferentially methionine, from peptides and arylamides.. Cotranslationally removes the N-terminal methionine from nascent proteins. The N-terminal methionine is often cleaved when the second residue in the primary sequence is small and uncharged (Met-Ala-, Cys, Gly, Pro, Ser, Thr, or Val). This Aspergillus terreus (strain NIH 2624 / FGSC A1156) protein is Methionine aminopeptidase 2-1.